Here is a 241-residue protein sequence, read N- to C-terminus: Leucyl/phenylalanyl-tRNA--protein transferase (241 aa).

It belongs to the L/F-transferase family.

Its subcellular location is the cytoplasm. It catalyses the reaction N-terminal L-lysyl-[protein] + L-leucyl-tRNA(Leu) = N-terminal L-leucyl-L-lysyl-[protein] + tRNA(Leu) + H(+). The enzyme catalyses N-terminal L-arginyl-[protein] + L-leucyl-tRNA(Leu) = N-terminal L-leucyl-L-arginyl-[protein] + tRNA(Leu) + H(+). The catalysed reaction is L-phenylalanyl-tRNA(Phe) + an N-terminal L-alpha-aminoacyl-[protein] = an N-terminal L-phenylalanyl-L-alpha-aminoacyl-[protein] + tRNA(Phe). Functions in the N-end rule pathway of protein degradation where it conjugates Leu, Phe and, less efficiently, Met from aminoacyl-tRNAs to the N-termini of proteins containing an N-terminal arginine or lysine. The chain is Leucyl/phenylalanyl-tRNA--protein transferase from Colwellia psychrerythraea (strain 34H / ATCC BAA-681) (Vibrio psychroerythus).